The chain runs to 349 residues: 5-deoxyribose 1-phosphate isomerase (349 aa).

Substrate-binding positions include 49–51 (RGA), Arg92, and Gln199. The active-site Proton donor is the Asp240. Substrate is bound at residue 250 to 251 (NK).

Belongs to the EIF-2B alpha/beta/delta subunits family. DrdI subfamily.

It catalyses the reaction 5-deoxy-alpha-D-ribose 1-phosphate = 5-deoxy-D-ribulose 1-phosphate. It functions in the pathway carbohydrate degradation. Catalyzes the isomerization of 5-deoxy-alpha-D-ribose 1-phosphate to 5-deoxy-D-ribulose 1-phosphate, as part of a 5-deoxyribose salvage pathway that recycles this toxic radical SAM enzyme by-product to mainstream metabolites. The chain is 5-deoxyribose 1-phosphate isomerase from Clostridium botulinum (strain Kyoto / Type A2).